The primary structure comprises 318 residues: Transaldolase (318 aa).

Lys132 acts as the Schiff-base intermediate with substrate in catalysis.

This sequence belongs to the transaldolase family. Type 1 subfamily. In terms of assembly, homodimer.

Its subcellular location is the cytoplasm. It carries out the reaction D-sedoheptulose 7-phosphate + D-glyceraldehyde 3-phosphate = D-erythrose 4-phosphate + beta-D-fructose 6-phosphate. It functions in the pathway carbohydrate degradation; pentose phosphate pathway; D-glyceraldehyde 3-phosphate and beta-D-fructose 6-phosphate from D-ribose 5-phosphate and D-xylulose 5-phosphate (non-oxidative stage): step 2/3. Its function is as follows. Transaldolase is important for the balance of metabolites in the pentose-phosphate pathway. The sequence is that of Transaldolase from Shewanella putrefaciens (strain CN-32 / ATCC BAA-453).